We begin with the raw amino-acid sequence, 822 residues long: Valine--tRNA ligase (822 aa).

The 'HIGH' region motif lies at 41 to 51 (PNVTGQLHLGH). The 'KMSKS' region signature appears at 511–515 (KMSKS). K514 serves as a coordination point for ATP. Residues 765–822 (EQKGRELKEIQFLKSEILRAEKILTNKGFLEKAPREKIDLERTKLEKLKEKLAFYEKK) adopt a coiled-coil conformation.

Belongs to the class-I aminoacyl-tRNA synthetase family. ValS type 1 subfamily. Monomer.

It localises to the cytoplasm. It catalyses the reaction tRNA(Val) + L-valine + ATP = L-valyl-tRNA(Val) + AMP + diphosphate. Functionally, catalyzes the attachment of valine to tRNA(Val). As ValRS can inadvertently accommodate and process structurally similar amino acids such as threonine, to avoid such errors, it has a 'posttransfer' editing activity that hydrolyzes mischarged Thr-tRNA(Val) in a tRNA-dependent manner. The chain is Valine--tRNA ligase from Mesomycoplasma hyopneumoniae (strain 232) (Mycoplasma hyopneumoniae).